The chain runs to 904 residues: DNA mismatch repair protein MutS (904 aa).

An ATP-binding site is contributed by 654 to 661 (GPNMAGKS).

Belongs to the DNA mismatch repair MutS family.

Functionally, this protein is involved in the repair of mismatches in DNA. It is possible that it carries out the mismatch recognition step. This protein has a weak ATPase activity. This Caulobacter sp. (strain K31) protein is DNA mismatch repair protein MutS.